Consider the following 548-residue polypeptide: Undecaprenyl phosphate-alpha-4-amino-4-deoxy-L-arabinose arabinosyl transferase 1 (548 aa).

12 consecutive transmembrane segments (helical) span residues 11–31 (WLLF…TRLL), 89–109 (IVVV…AMVV), 114–134 (ALAF…AIGT), 137–157 (ILDP…LVAL), 180–200 (FLTK…VMAI), 214–234 (IALL…ALQA), 263–283 (FYIP…FGAL), 292–312 (GTLY…ASKG), 314–334 (LLTY…HYIE), 347–367 (VNAS…IYSL), 382–402 (KIVL…GALF), and 405–425 (TQFL…YAIP).

The protein belongs to the glycosyltransferase 83 family.

The protein resides in the cell inner membrane. The enzyme catalyses 4-amino-4-deoxy-alpha-L-arabinopyranosyl di-trans,octa-cis-undecaprenyl phosphate + lipid IVA = lipid IIA + di-trans,octa-cis-undecaprenyl phosphate.. It functions in the pathway lipopolysaccharide metabolism; 4-amino-4-deoxy-beta-L-arabinose-lipid A biosynthesis. Functionally, catalyzes the transfer of the L-Ara4N moiety of the glycolipid undecaprenyl phosphate-alpha-L-Ara4N to lipid A. The modified arabinose is attached to lipid A and is required for resistance to polymyxin and cationic antimicrobial peptides. This chain is Undecaprenyl phosphate-alpha-4-amino-4-deoxy-L-arabinose arabinosyl transferase 1, found in Proteus mirabilis (strain HI4320).